A 258-amino-acid polypeptide reads, in one-letter code: Probable F-box protein At2g29610 (258 aa).

The tract at residues 1 to 25 (MVELSEIPGDPNGADPNNNPQEEDE) is disordered. Residues 8–20 (PGDPNGADPNNNP) are compositionally biased toward low complexity. One can recognise an F-box domain in the interval 28 to 74 (LPILLQLPEELIERIIAHFPQCYSPSPILVCETFRQVINSDHFYYVT).

The protein is Probable F-box protein At2g29610 of Arabidopsis thaliana (Mouse-ear cress).